Consider the following 143-residue polypeptide: Fluoride-specific ion channel FluC (143 aa).

Helical transmembrane passes span 3–23, 41–61, 76–96, and 103–123; these read AVVW…GSGL, WGTL…LIWL, IVGL…CLVF, and LMVG…VFLG. Residues glycine 81 and threonine 84 each contribute to the Na(+) site.

The protein belongs to the fluoride channel Fluc/FEX (TC 1.A.43) family.

It is found in the cell inner membrane. The catalysed reaction is fluoride(in) = fluoride(out). Its activity is regulated as follows. Na(+) is not transported, but it plays an essential structural role and its presence is essential for fluoride channel function. In terms of biological role, fluoride-specific ion channel. Important for reducing fluoride concentration in the cell, thus reducing its toxicity. The chain is Fluoride-specific ion channel FluC from Xylella fastidiosa (strain 9a5c).